Consider the following 205-residue polypeptide: Putative STAG3-like protein 1 (205 aa).

An SCD domain is found at 10 to 95 (PKVTCRDVLP…GRFKDWMVSM (86 aa)).

The protein belongs to the SCC3 family.

The protein resides in the nucleus. In Homo sapiens (Human), this protein is Putative STAG3-like protein 1 (STAG3L1).